A 323-amino-acid polypeptide reads, in one-letter code: MSPHKIPEVHRHIMSSRYMEGNAVSIINMPFSGGQPKDGAELAPEMIEAAGLPEDLERLGYSVNVVQNPKFKSRPLKEGPNQALMKNPLYVSNVTRQVRNIVQQELEKQRIAVNIGGDHSLAIGTVEGVQAVYDDACVLWIDAHADINTPDSSPSKNLHGCPLSFSLGYAEPLPEEFAWTRRVIEERRLAFIGLRDLDPMERAFLRERSITAYTMHDVDKYGIARVVEMALEHINPGRRRPIHLSFDVDACDPIVAPATGTRVPGGLTFREAMYICESVAETGSLVAVDVMEVNPLLGNKEEAKTTVDLARSIVRTCLGQTLL.

Mn(2+)-binding residues include histidine 119, aspartate 142, histidine 144, and aspartate 146. Residues 144–148, 155–157, and aspartate 198 contribute to the substrate site; these read HADIN and SKN. Mn(2+)-binding residues include aspartate 247 and aspartate 249. The substrate site is built by threonine 261 and glutamate 292.

The protein belongs to the arginase family. In terms of assembly, homotrimer. Mn(2+) serves as cofactor.

It catalyses the reaction L-arginine + H2O = urea + L-ornithine. Its pathway is nitrogen metabolism; urea cycle; L-ornithine and urea from L-arginine: step 1/1. The protein is Arginase (car1) of Schizosaccharomyces pombe (strain 972 / ATCC 24843) (Fission yeast).